A 452-amino-acid chain; its full sequence is Serine carboxypeptidase-like 26 (452 aa).

A signal peptide spans 1 to 20; sequence MARLLLLFFFFLILLHYASC. Residues N52 and N138 are each glycosylated (N-linked (GlcNAc...) asparagine). Cystine bridges form between C87–C338, C244–C256, and C280–C306. S180 is an active-site residue. A glycan (N-linked (GlcNAc...) asparagine) is linked at N327. Catalysis depends on residues D375 and H427.

It belongs to the peptidase S10 family. As to expression, ubiquitous.

It localises to the secreted. In terms of biological role, probable carboxypeptidase. The sequence is that of Serine carboxypeptidase-like 26 (SCPL26) from Arabidopsis thaliana (Mouse-ear cress).